Reading from the N-terminus, the 918-residue chain is Glutamate receptor ionotropic, kainate 1 (918 aa).

A signal peptide spans 1–30 (MELGTLLAQPGLWTRDTSWALLYFLCYILP). Over 31–576 (QTAPQVLRIG…VFSFLNPLSP (546 aa)) the chain is Extracellular. Residues Asn-68, Asn-74, Asn-276, Asn-379, Asn-428, Asn-439, and Asn-446 are each glycosylated (N-linked (GlcNAc...) asparagine). Pro-531, Thr-533, and Arg-538 together coordinate L-glutamate. Asn-561 carries N-linked (GlcNAc...) asparagine glycosylation. Residues 577 to 597 (DIWMYVLLACLGVSCVLFVIA) form a helical membrane-spanning segment. The Cytoplasmic portion of the chain corresponds to 598 to 653 (RFTPYEWYNPHPCNPDSDVVENNFTLLNSFWFGVGALMQQGSELMPKALSTRIVGG). Residues 654–674 (IWWFFTLIIISSYTANLAAFL) form a helical membrane-spanning segment. Over 675 to 834 (TVERMESPID…KEASALGVEN (160 aa)) the chain is Extracellular. L-glutamate-binding residues include Ser-704 and Thr-705. Ser-725 carries the post-translational modification Phosphoserine; by PKC. Glu-753 is a binding site for L-glutamate. Thr-761 is modified (phosphothreonine; by PKC). A disulfide bond links Cys-765 and Cys-819. The N-linked (GlcNAc...) asparagine glycan is linked to Asn-766. Residues 835–855 (IGGIFIVLAAGLVLSVFVAIG) traverse the membrane as a helical segment. Residues 856–918 (EFIYKSRKNN…IRKQSSVHTV (63 aa)) are Cytoplasmic-facing.

This sequence belongs to the glutamate-gated ion channel (TC 1.A.10.1) family. GRIK1 subfamily. In terms of assembly, homotetramer or heterotetramer of pore-forming glutamate receptor subunits. Tetramers may be formed by the dimerization of dimers. Can form functional heteromeric receptors with GRIK4 and GRIK5. Interacts with KLHL17.

The protein localises to the cell membrane. Its subcellular location is the postsynaptic cell membrane. The catalysed reaction is Ca(2+)(in) = Ca(2+)(out). In terms of biological role, ionotropic glutamate receptor that functions as a cation-permeable ligand-gated ion channel, gated by L-glutamate and the glutamatergic agonist kainic acid. L-glutamate acts as an excitatory neurotransmitter at many synapses in the central nervous system. Binding of the excitatory neurotransmitter L-glutamate induces a conformation change, leading to the opening of the cation channel, and thereby converts the chemical signal to an electrical impulse. The receptor then desensitizes rapidly and enters a transient inactive state, characterized by the presence of bound agonist. The chain is Glutamate receptor ionotropic, kainate 1 (GRIK1) from Macaca fascicularis (Crab-eating macaque).